Here is a 110-residue protein sequence, read N- to C-terminus: Large ribosomal subunit protein uL22 (110 aa).

This sequence belongs to the universal ribosomal protein uL22 family. In terms of assembly, part of the 50S ribosomal subunit.

Functionally, this protein binds specifically to 23S rRNA; its binding is stimulated by other ribosomal proteins, e.g. L4, L17, and L20. It is important during the early stages of 50S assembly. It makes multiple contacts with different domains of the 23S rRNA in the assembled 50S subunit and ribosome. In terms of biological role, the globular domain of the protein is located near the polypeptide exit tunnel on the outside of the subunit, while an extended beta-hairpin is found that lines the wall of the exit tunnel in the center of the 70S ribosome. The sequence is that of Large ribosomal subunit protein uL22 from Leptospira interrogans serogroup Icterohaemorrhagiae serovar copenhageni (strain Fiocruz L1-130).